We begin with the raw amino-acid sequence, 151 residues long: Ubiquitin-conjugating enzyme E2 2 (151 aa).

The interval methionine 1 to alanine 26 is disordered. The 147-residue stretch at serine 4–glutamate 150 folds into the UBC core domain. The Glycyl thioester intermediate role is filled by cysteine 88.

Belongs to the ubiquitin-conjugating enzyme family.

It localises to the cytoplasm. The protein localises to the nucleus. The enzyme catalyses S-ubiquitinyl-[E1 ubiquitin-activating enzyme]-L-cysteine + [E2 ubiquitin-conjugating enzyme]-L-cysteine = [E1 ubiquitin-activating enzyme]-L-cysteine + S-ubiquitinyl-[E2 ubiquitin-conjugating enzyme]-L-cysteine.. It participates in protein modification; protein ubiquitination. In terms of biological role, catalyzes the covalent attachment of ubiquitin to other proteins. Plays a role in transcription regulation by catalyzing the monoubiquitination of histone H2B to form H2BK123ub1. H2BK123ub1 gives a specific tag for epigenetic transcriptional activation and is also a prerequisite for H3K4me and H3K79me formation. Also involved in postreplication repair of UV-damaged DNA, in N-end rule-dependent protein degradation and in sporulation. The chain is Ubiquitin-conjugating enzyme E2 2 (uvsJ) from Emericella nidulans (strain FGSC A4 / ATCC 38163 / CBS 112.46 / NRRL 194 / M139) (Aspergillus nidulans).